A 187-amino-acid chain; its full sequence is Benzene 1,2-dioxygenase subunit beta (187 aa).

The protein belongs to the bacterial ring-hydroxylating dioxygenase beta subunit family. In terms of assembly, this dioxygenase system consists of four proteins: the two subunits of the hydroxylase component (BedC1 and BedC2), a ferredoxin (BedB) and a ferredoxin reductase (BedA).

It carries out the reaction benzene + NADH + O2 + H(+) = cis-1,2-dihydrobenzene-1,2-diol + NAD(+). It participates in aromatic compound metabolism; benzene degradation; catechol from benzene: step 1/2. The beta subunit may be responsible for the substrate specificity of the enzyme. The polypeptide is Benzene 1,2-dioxygenase subunit beta (bedC2) (Pseudomonas putida (Arthrobacter siderocapsulatus)).